The sequence spans 457 residues: Angiopoietin-related protein 6 (457 aa).

Residues 1-24 form the signal peptide; that stretch reads MGTARLRKLQLLLLLGAWRALGGA. 2 coiled-coil regions span residues 51–77 and 126–164; these read DSEL…RAAE and LLAE…QHSS. The interval 201-235 is disordered; that stretch reads SNTSRRLDQTPEHQREQSLRQQGPPSSLLPTGHLA. N-linked (GlcNAc...) asparagine glycosylation is present at N202. Over residues 205 to 218 the composition is skewed to basic and acidic residues; the sequence is RRLDQTPEHQREQS. Over residues 219-229 the composition is skewed to polar residues; sequence LRQQGPPSSLL. The Fibrinogen C-terminal domain occupies 238-456; that stretch reads TRPVGPWRDC…KAVMLTRLVR (219 aa). Cystine bridges form between C247–C274 and C397–C410.

Highly expressed in the liver, specifically in hepatocytes, and weakly in the heart. Expressed in hematopoietic cells, platelets and mast cells, and detected at wounded skin.

The protein resides in the secreted. Its function is as follows. May play a role in the wound healing process. May promote epidermal proliferation, remodeling and regeneration. May promote the chemotactic activity of endothelial cells and induce neovascularization. May counteract high-fat diet-induced obesity and related insulin resistance through increased energy expenditure. This chain is Angiopoietin-related protein 6 (Angptl6), found in Mus musculus (Mouse).